Reading from the N-terminus, the 234-residue chain is Endonuclease V (234 aa).

Aspartate 36 and aspartate 104 together coordinate Mg(2+).

This sequence belongs to the endonuclease V family. Mg(2+) serves as cofactor.

It localises to the cytoplasm. The enzyme catalyses Endonucleolytic cleavage at apurinic or apyrimidinic sites to products with a 5'-phosphate.. In terms of biological role, DNA repair enzyme involved in the repair of deaminated bases. Selectively cleaves double-stranded DNA at the second phosphodiester bond 3' to a deoxyinosine leaving behind the intact lesion on the nicked DNA. This chain is Endonuclease V, found in Yersinia pseudotuberculosis serotype O:1b (strain IP 31758).